The chain runs to 515 residues: Fc receptor-like protein 4 (515 aa).

The N-terminal stretch at 1–19 (MLLWASLLAFAPVCGQSAA) is a signal peptide. The Extracellular portion of the chain corresponds to 20–387 (AHKPVISVHP…RETPGNRDGL (368 aa)). Ig-like C2-type domains follow at residues 23-97 (PVIS…NPVR), 102-183 (SDSL…NFKI), 193-271 (PELK…GNIH), and 275-374 (PSLQ…MVLN). 4 disulfides stabilise this stretch: C44–C85, C123–C167, C212–C261, and C310–C359. N374 is a glycosylation site (N-linked (GlcNAc...) asparagine). A helical membrane pass occupies residues 388–408 (VAAGATGGLLSALLLAVALLF). Residues 409-515 (HCWRRRKSGV…GKISSKDEES (107 aa)) are Cytoplasmic-facing. 3 short sequence motifs (ITIM motif) span residues 449–454 (SLYVDV), 461–466 (LVYSEI), and 491–496 (VVYSEV). Residues 494 to 515 (SEVKTQHPDNSAGKISSKDEES) are disordered.

In terms of assembly, interacts with PTPN6 and PTPN11. Post-translationally, phosphorylated on cytoplasmic tyrosines upon activation. In terms of tissue distribution, specifically expressed by memory and monocytoid B-cells which populate spleen and lymph nodes. Preferentially expressed in memory B-cells associated with mucosal tissue (at protein level).

The protein localises to the cell membrane. Functionally, may function as an inhibitor of the B-cell receptor signaling. May function in the B-cell-mediated immune response. The polypeptide is Fc receptor-like protein 4 (FCRL4) (Homo sapiens (Human)).